The primary structure comprises 220 residues: 3-keto-L-gulonate-6-phosphate decarboxylase SgbH (220 aa).

D11 lines the substrate pocket. Mg(2+)-binding residues include E33 and D62. R192 contacts substrate.

The protein belongs to the HPS/KGPDC family. KGPDC subfamily. As to quaternary structure, homodimer. Requires Mg(2+) as cofactor.

It catalyses the reaction 3-dehydro-L-gulonate 6-phosphate + H(+) = L-xylulose 5-phosphate + CO2. Catalyzes the decarboxylation of 3-keto-L-gulonate-6-P into L-xylulose-5-P. May be involved in the utilization of 2,3-diketo-L-gulonate. The protein is 3-keto-L-gulonate-6-phosphate decarboxylase SgbH (sgbH) of Escherichia coli (strain K12).